The chain runs to 271 residues: Coiled-coil domain-containing protein ORF29 (271 aa).

The disordered stretch occupies residues 1–39; that stretch reads MNEKTESEIFEEQNSLYKPIKQEKKTPSTPESEDKNDQS. A compositionally biased stretch (basic and acidic residues) spans 20–37; sequence IKQEKKTPSTPESEDKND. A coiled-coil region spans residues 208–228; the sequence is RATQTQEILLNSLRKNLQMLE.

The chain is Coiled-coil domain-containing protein ORF29 from Helicobacter pylori (strain 35A).